A 658-amino-acid polypeptide reads, in one-letter code: DNA mismatch repair protein MutL (658 aa).

Residues 114 to 130 (RQEDSSHATQVKAEDGK) show a composition bias toward basic and acidic residues. Disordered regions lie at residues 114–138 (RQED…TAAA) and 353–405 (PMPS…HSLS). The segment covering 361 to 372 (ENLFDSASNHPT) has biased composition (polar residues).

It belongs to the DNA mismatch repair MutL/HexB family.

This protein is involved in the repair of mismatches in DNA. It is required for dam-dependent methyl-directed DNA mismatch repair. May act as a 'molecular matchmaker', a protein that promotes the formation of a stable complex between two or more DNA-binding proteins in an ATP-dependent manner without itself being part of a final effector complex. This chain is DNA mismatch repair protein MutL, found in Neisseria gonorrhoeae (strain NCCP11945).